The chain runs to 396 residues: Serpin-ZXA (396 aa).

The interval 343–367 is RCL; sequence GTEAAAATAAVITLRSAPIAEDFVA.

This sequence belongs to the serpin family.

In terms of biological role, probable serine protease inhibitor. In Oryza sativa subsp. japonica (Rice), this protein is Serpin-ZXA.